A 219-amino-acid chain; its full sequence is MKEIIDGFLKFQREAFPKREALFKQLATQQSPRTLFISCSDSRLVPELVTQREPGDLFVIRNAGNIVPSYGPEPGGVSASVEYAVAALRVSDIVICGHSNCGAMTAIASCQCMDHMPAVSHWLRYADSARVVNEARPHSDLPSKAAAMVRENVIAQLANLQTHPSVRLALEEGRIALHGWVYDIESGSIAAFDGATRQFVPLAANPRVCAIPLRQPTAA.

Positions 39, 41, 98, and 101 each coordinate Zn(2+).

It belongs to the beta-class carbonic anhydrase family. Oligomer. Requires Zn(2+) as cofactor.

The catalysed reaction is hydrogencarbonate + H(+) = CO2 + H2O. In terms of biological role, reversible hydration of carbon dioxide. Carbon dioxide formed in the bicarbonate-dependent decomposition of cyanate by cyanase (CynS) diffuses out of the cell faster than it would be hydrated to bicarbonate, so the apparent function of this enzyme is to catalyze the hydration of carbon dioxide and thus prevent depletion of cellular bicarbonate. This is Carbonic anhydrase 1 (cynT) from Escherichia coli O157:H7.